The sequence spans 369 residues: Delta(12)-oleate desaturase (369 aa).

The next 2 helical transmembrane spans lie at 41–61 (LLSD…YFPL) and 69–89 (IAWP…WVIA). The Histidine box-1 motif lies at 90–94 (HECGH). Residues 102-122 (LIDDIVGLFFHSALLVPYFSW) form a helical membrane-spanning segment. Positions 126–130 (HRRHH) match the Histidine box-2 motif. 3 consecutive transmembrane segments (helical) span residues 164–184 (LISL…FNMS), 207–227 (WIQV…LYRI), and 234–254 (FWVM…LVLI). Positions 300 to 304 (HVVHH) match the Histidine box-3 motif.

Belongs to the fatty acid desaturase type 1 family.

It is found in the membrane. Its pathway is lipid metabolism; polyunsaturated fatty acid biosynthesis. In terms of biological role, delta(12)-fatty acid desaturase producing in a heterologous system linoleic acid (18:2(9Z,12Z)) and to a lower extent hexadecadienoic acid (16:2(9Z,12Z)). This is Delta(12)-oleate desaturase from Trichosanthes kirilowii (Chinese snake gourd).